Reading from the N-terminus, the 512-residue chain is Sodium-dependent phosphate transport protein 1, chloroplastic (512 aa).

The transit peptide at 1–59 (MNARALLCSSNIHSLYTSNRPPEKTSSSRSLRNLKPSPKSLRVWIYPRNRSSVFRVLVR) directs the protein to the chloroplast. The next 11 helical transmembrane spans lie at 103 to 123 (WVIV…RVNM), 141 to 161 (VGLI…AGGI), 171 to 191 (VLGF…VAAK), 192 to 212 (LGLP…GVAM), 234 to 254 (LVYS…PFLI), 257 to 277 (FGWP…LTLW), 323 to 343 (VWAL…LLTW), 361 to 381 (LLSV…GWIA), 401 to 421 (IGFL…SPTM), 453 to 473 (GVLL…GTAA), and 486 to 506 (VFTI…LFST).

It belongs to the major facilitator superfamily. Sodium/anion cotransporter (TC 2.A.1.14) family. Expressed in flower buds, sepals of mature flowers and mature leaves, less in senescent leaves and at low levels in roots.

It is found in the plastid. It localises to the chloroplast thylakoid membrane. In terms of biological role, specific for inorganic phosphate transport across the thylakoid membrane in a sodium dependent manner. Binds glutamate but cannot transport it. May act as an ascorbate transporter at the thylakoid membrane. The chain is Sodium-dependent phosphate transport protein 1, chloroplastic (ANTR1) from Arabidopsis thaliana (Mouse-ear cress).